Reading from the N-terminus, the 295-residue chain is (R)-phenoxypropionate/alpha-ketoglutarate-dioxygenase (295 aa).

2 residues coordinate Fe cation: H111 and D113. 2-oxoglutarate contacts are provided by T138 and W255. Residue H270 participates in Fe cation binding. R281 is a 2-oxoglutarate binding site.

Belongs to the TfdA dioxygenase family. In terms of assembly, homotrimer. Fe cation is required as a cofactor. Requires L-ascorbate as cofactor.

It catalyses the reaction (R)-2-(4-chloro-2-methylphenoxy)propanoate + 2-oxoglutarate + O2 = 2-methyl-4-chlorophenol + pyruvate + succinate + CO2. It carries out the reaction (R)-(2,4-dichlorophenoxy)propanoate + 2-oxoglutarate + O2 = 2,4-dichlorophenol + pyruvate + succinate + CO2. It participates in xenobiotic degradation; 2-(2,4-dichlorophenoxy)propanoate degradation. Its activity is regulated as follows. Inhibited by divalent cations, most significantly by copper and nickel, and by diethylpyrocarbonate (DEPC). Involved in the degradation of the phenoxypropionate herbicides. Catalyzes the enantiospecific cleavage of the ether bond in the herbicid R-dichlorprop ((R)-2-(2,4-dichlorophenoxy)propionate)(R-2,4-DP) and R-mecoprop ((R)-2-(4-chloro-2-methylphenoxy)propionate)(R-2,4-MCPP). It can also accept (RS)-2-(2,4,5-trichlorophenoxy)propionate, (RS)-2-(4-chlorophenoxy)propionate, (RS)-2-(m-chlorophenoxy)propionate, however it can only accept 2-oxoglutarate as oxygen acceptor. This chain is (R)-phenoxypropionate/alpha-ketoglutarate-dioxygenase, found in Delftia acidovorans (Pseudomonas acidovorans).